Consider the following 375-residue polypeptide: Protein RecA (375 aa).

The disordered stretch occupies residues 1 to 20 (MPAEMKSAASGSDPRSSGER). 79–86 (GPESSGKT) provides a ligand contact to ATP.

It belongs to the RecA family.

It localises to the cytoplasm. In terms of biological role, can catalyze the hydrolysis of ATP in the presence of single-stranded DNA, the ATP-dependent uptake of single-stranded DNA by duplex DNA, and the ATP-dependent hybridization of homologous single-stranded DNAs. It interacts with LexA causing its activation and leading to its autocatalytic cleavage. The polypeptide is Protein RecA (Parasynechococcus marenigrum (strain WH8102)).